The primary structure comprises 423 residues: Putative galacturan 1,4-alpha-galacturonidase C (423 aa).

The first 20 residues, 1–20 (MRFSIISLVSLPLFLGLTYA), serve as a signal peptide directing secretion. Asn-100, Asn-120, Asn-150, Asn-173, and Asn-185 each carry an N-linked (GlcNAc...) asparagine glycan. Asp-229 (proton donor) is an active-site residue. A disulfide bridge connects residues Cys-231 and Cys-248. Asn-245 is a glycosylation site (N-linked (GlcNAc...) asparagine). The active site involves Asn-252. 2 N-linked (GlcNAc...) asparagine glycosylation sites follow: Asn-344 and Asn-362. A disulfide bridge links Cys-379 with Cys-385. A glycan (N-linked (GlcNAc...) asparagine) is linked at Asn-400. Cys-409 and Cys-423 are disulfide-bonded.

Belongs to the glycosyl hydrolase 28 family.

Its subcellular location is the secreted. It carries out the reaction [(1-&gt;4)-alpha-D-galacturonosyl](n) + H2O = alpha-D-galacturonate + [(1-&gt;4)-alpha-D-galacturonosyl](n-1). Functionally, specific in hydrolyzing the terminal glycosidic bond of polygalacturonic acid and oligogalacturonates. The sequence is that of Putative galacturan 1,4-alpha-galacturonidase C (rgxC) from Neosartorya fischeri (strain ATCC 1020 / DSM 3700 / CBS 544.65 / FGSC A1164 / JCM 1740 / NRRL 181 / WB 181) (Aspergillus fischerianus).